The sequence spans 194 residues: ATP-dependent Clp protease proteolytic subunit (194 aa).

The active-site Nucleophile is Ser-98. His-123 is an active-site residue.

This sequence belongs to the peptidase S14 family. In terms of assembly, fourteen ClpP subunits assemble into 2 heptameric rings which stack back to back to give a disk-like structure with a central cavity, resembling the structure of eukaryotic proteasomes.

Its subcellular location is the cytoplasm. The enzyme catalyses Hydrolysis of proteins to small peptides in the presence of ATP and magnesium. alpha-casein is the usual test substrate. In the absence of ATP, only oligopeptides shorter than five residues are hydrolyzed (such as succinyl-Leu-Tyr-|-NHMec, and Leu-Tyr-Leu-|-Tyr-Trp, in which cleavage of the -Tyr-|-Leu- and -Tyr-|-Trp bonds also occurs).. Its function is as follows. Cleaves peptides in various proteins in a process that requires ATP hydrolysis. Has a chymotrypsin-like activity. Plays a major role in the degradation of misfolded proteins. The protein is ATP-dependent Clp protease proteolytic subunit of Aliarcobacter butzleri (strain RM4018) (Arcobacter butzleri).